Here is a 502-residue protein sequence, read N- to C-terminus: Facilitated trehalose transporter Tret1 (502 aa).

The Cytoplasmic portion of the chain corresponds to 1 to 38; sequence MGVENTKQTMSSQNIKPAKDSDDVLHTQFKEVKRSPMR. A helical transmembrane segment spans residues 39 to 59; the sequence is YTMQLLAALAVSMASLMIGYS. The Extracellular portion of the chain corresponds to 60 to 83; sequence SSYTSPALVSMRDNTTATFEVTMD. Asparagine 73 is a glycosylation site (N-linked (GlcNAc...) asparagine). A helical transmembrane segment spans residues 84–104; that stretch reads MAMWIGSIMPLSALIGGIIGG. Topologically, residues 105–120 are cytoplasmic; that stretch reads PCIEYIGRRNTILSTA. A helical transmembrane segment spans residues 121–141; it reads LPFLAGWLFIALATNVAMILV. Topologically, residues 142–144 are extracellular; the sequence is GRS. Residues 145–165 form a helical membrane-spanning segment; that stretch reads ICGFCVGVASLSLPVYLGESI. Residues 166–172 lie on the Cytoplasmic side of the membrane; it reads QPEVRGS. Residues 173–193 traverse the membrane as a helical segment; that stretch reads LGLLPTVFGNSGILMCFTAGM. Residues 194-199 lie on the Extracellular side of the membrane; that stretch reads YLAWRN. The helical transmembrane segment at 200-220 threads the bilayer; the sequence is LALLGACIPIIFLILMFLIPE. Residues 221–282 lie on the Cytoplasmic side of the membrane; it reads TPRWYISKGK…ELFRKNHIKP (62 aa). The chain crosses the membrane as a helical span at residues 283–303; it reads VFISLGLMFFQQFSGINAVIF. Residues 304 to 319 are Extracellular-facing; sequence YTVQIFKDSGSTVDEN. N-linked (GlcNAc...) asparagine glycosylation occurs at asparagine 319. The helical transmembrane segment at 320 to 340 threads the bilayer; that stretch reads LSTIIVGLVNFISTFVAAMII. The Cytoplasmic portion of the chain corresponds to 341–346; it reads DRLGRK. A helical transmembrane segment spans residues 347–367; sequence MLLYISSILMCITLFTFGTFF. The Extracellular portion of the chain corresponds to 368-376; sequence YVKELMDVT. The chain crosses the membrane as a helical span at residues 377–397; that stretch reads AFGWIPLMSLIVYVIGFSFGF. Residues 398–410 are Cytoplasmic-facing; sequence GPIPWLMMGEILP. Residues 411-433 traverse the membrane as a helical segment; that stretch reads VKIRGTAASVATAFNWSCTFVVT. Residues 434–446 are Extracellular-facing; sequence KTYEDLVLHIGPY. Residues 447–467 traverse the membrane as a helical segment; that stretch reads GTFWLFGTLVAVAFIFVIICV. Topologically, residues 468-502 are cytoplasmic; sequence PETRGRSLEEIERRFAGPVRRTSAIANLKPMPITI.

The protein belongs to the major facilitator superfamily. Sugar transporter (TC 2.A.1.1) family. Trehalose transporter subfamily.

It localises to the cell membrane. Functionally, moderate-capacity facilitative transporter for trehalose. Does not transport maltose, sucrose or lactose. Mediates the bidirectional transfer of trehalose. Responsible for the transport of trehalose synthesized in the fat body and the incorporation of trehalose into other tissues that require a carbon source, thereby regulating trehalose levels in the hemolymph. The sequence is that of Facilitated trehalose transporter Tret1 from Apis mellifera ligustica (Common honeybee).